A 495-amino-acid chain; its full sequence is Maturase K (495 aa).

This sequence belongs to the intron maturase 2 family. MatK subfamily.

Its subcellular location is the plastid. It localises to the chloroplast. Functionally, usually encoded in the trnK tRNA gene intron. Probably assists in splicing its own and other chloroplast group II introns. The chain is Maturase K from Torreya californica (California nutmeg).